Here is a 135-residue protein sequence, read N- to C-terminus: P2Y purinoceptor 4 (135 aa).

The chain crosses the membrane as a helical span at residues 1-25 (VHFSSSVMVLLFGLPFLVTLVCYGL). At 26-49 (MALRLCRPLPGAGQSSSRLRSLRT) the chain is on the cytoplasmic side. Residues 50 to 72 (IAVVMTVFAVCLVPFHITRTIYY) traverse the membrane as a helical segment. Residues 73–90 (LARLLKADCQILNIVNVV) are Extracellular-facing. A helical transmembrane segment spans residues 91–112 (YKVTRPLASANSCLDPLLYLFT). Residues 113–135 (GDKYRHQLQRLCRVSAPQRRITA) are Cytoplasmic-facing.

Belongs to the G-protein coupled receptor 1 family. In terms of tissue distribution, expressed in brain, heart, stria vascularis and vestibular labyrinth.

Its subcellular location is the cell membrane. Receptor for ATP and UTP coupled to G-proteins that activate a phosphatidylinositol-calcium second messenger system. Not activated by UDP. This is P2Y purinoceptor 4 (P2RY4) from Meriones unguiculatus (Mongolian jird).